Here is a 401-residue protein sequence, read N- to C-terminus: tRNA(Met) cytidine acetate ligase (401 aa).

ATP is bound by residues 7-20 (IVEY…HLYH), Gly-101, Asn-160, and 185-186 (RI).

It belongs to the TmcAL family.

It is found in the cytoplasm. The enzyme catalyses cytidine(34) in elongator tRNA(Met) + acetate + ATP = N(4)-acetylcytidine(34) in elongator tRNA(Met) + AMP + diphosphate. Functionally, catalyzes the formation of N(4)-acetylcytidine (ac(4)C) at the wobble position of elongator tRNA(Met), using acetate and ATP as substrates. First activates an acetate ion to form acetyladenylate (Ac-AMP) and then transfers the acetyl group to tRNA to form ac(4)C34. The chain is tRNA(Met) cytidine acetate ligase from Geobacillus sp. (strain WCH70).